Consider the following 153-residue polypeptide: Small ribosomal subunit protein uS13 (153 aa).

It belongs to the universal ribosomal protein uS13 family. Part of the 30S ribosomal subunit. Forms a loose heterodimer with protein S19. Forms two bridges to the 50S subunit in the 70S ribosome.

Its function is as follows. Located at the top of the head of the 30S subunit, it contacts several helices of the 16S rRNA. In the 70S ribosome it contacts the 23S rRNA (bridge B1a) and protein L5 of the 50S subunit (bridge B1b), connecting the 2 subunits; these bridges are implicated in subunit movement. The sequence is that of Small ribosomal subunit protein uS13 from Pyrobaculum islandicum (strain DSM 4184 / JCM 9189 / GEO3).